Here is a 220-residue protein sequence, read N- to C-terminus: Deoxyribose-phosphate aldolase (220 aa).

Catalysis depends on Asp-89, which acts as the Proton donor/acceptor. Residue Lys-151 is the Schiff-base intermediate with acetaldehyde of the active site. Catalysis depends on Lys-180, which acts as the Proton donor/acceptor.

The protein belongs to the DeoC/FbaB aldolase family. DeoC type 1 subfamily.

Its subcellular location is the cytoplasm. The enzyme catalyses 2-deoxy-D-ribose 5-phosphate = D-glyceraldehyde 3-phosphate + acetaldehyde. Its pathway is carbohydrate degradation; 2-deoxy-D-ribose 1-phosphate degradation; D-glyceraldehyde 3-phosphate and acetaldehyde from 2-deoxy-alpha-D-ribose 1-phosphate: step 2/2. Its function is as follows. Catalyzes a reversible aldol reaction between acetaldehyde and D-glyceraldehyde 3-phosphate to generate 2-deoxy-D-ribose 5-phosphate. This is Deoxyribose-phosphate aldolase from Staphylococcus carnosus (strain TM300).